We begin with the raw amino-acid sequence, 414 residues long: Eukaryotic initiation factor 4A (414 aa).

Residues E41 to Q69 carry the Q motif motif. The Helicase ATP-binding domain occupies I72 to I242. Residue A85–T92 participates in ATP binding. The short motif at D190–D193 is the DEAD box element. A Helicase C-terminal domain is found at G253 to L414.

This sequence belongs to the DEAD box helicase family. eIF4A subfamily. EIF4F is a multi-subunit complex, the composition of which varies with external and internal environmental conditions. It is composed of at least EIF4A, EIF4E and EIF4G.

The enzyme catalyses ATP + H2O = ADP + phosphate + H(+). Its function is as follows. ATP-dependent RNA helicase which is a subunit of the eIF4F complex involved in cap recognition and is required for mRNA binding to ribosome. In the current model of translation initiation, eIF4A unwinds RNA secondary structures in the 5'-UTR of mRNAs which is necessary to allow efficient binding of the small ribosomal subunit, and subsequent scanning for the initiator codon. The sequence is that of Eukaryotic initiation factor 4A from Triticum aestivum (Wheat).